Consider the following 172-residue polypeptide: Small ribosomal subunit protein uS5 (172 aa).

An S5 DRBM domain is found at 11–74; that stretch reads LSEVLVDVNR…QAAKKRMMKV (64 aa).

It belongs to the universal ribosomal protein uS5 family. In terms of assembly, part of the 30S ribosomal subunit. Contacts proteins S4 and S8.

In terms of biological role, with S4 and S12 plays an important role in translational accuracy. Located at the back of the 30S subunit body where it stabilizes the conformation of the head with respect to the body. The polypeptide is Small ribosomal subunit protein uS5 (Rickettsia canadensis (strain McKiel)).